Consider the following 231-residue polypeptide: MKKTLLASSLAVGLGIVAGNAGHEAHASEADLNKASLAQMAQSNDQTLNQKPIEAGAYNYTFDYEGFTYHFESDGTHFAWNYHATGANGANMSAQAPATNNVEPSAVQANQVQSQEVEAPQNAQTQQPQASTSNNSQVTATPTESKASEGSSVNVNAHLKQIAQRESGGNIHAVNPTSGAAGKYQFLQSTWDSVAPAKYKGVSPANAPESVQDAAAVKLYNTGGAGHWVTA.

An N-terminal signal peptide occupies residues 1-27 (MKKTLLASSLAVGLGIVAGNAGHEAHA). Residues 93–116 (SAQAPATNNVEPSAVQANQVQSQE) are compositionally biased toward polar residues. The disordered stretch occupies residues 93–152 (SAQAPATNNVEPSAVQANQVQSQEVEAPQNAQTQQPQASTSNNSQVTATPTESKASEGSS). A compositionally biased stretch (low complexity) spans 119 to 137 (APQNAQTQQPQASTSNNSQ). A compositionally biased stretch (polar residues) spans 138–152 (VTATPTESKASEGSS).

It belongs to the transglycosylase family. SceD subfamily.

It is found in the secreted. Its function is as follows. Is able to cleave peptidoglycan and affects clumping and separation of bacterial cells. The polypeptide is Probable transglycosylase SceD (sceD) (Staphylococcus aureus (strain Mu3 / ATCC 700698)).